The sequence spans 249 residues: Ribonuclease 3 (249 aa).

The RNase III domain occupies 21 to 149 (VDHQPLIDAL…LLGAIYLAHG (129 aa)). Position 62 (E62) interacts with Mg(2+). D66 is an active-site residue. Mg(2+) contacts are provided by D135 and E138. E138 is an active-site residue. Positions 176 to 244 (DWKTTLQERL…AHKAVGFLQD (69 aa)) constitute a DRBM domain.

The protein belongs to the ribonuclease III family. As to quaternary structure, homodimer. Mg(2+) serves as cofactor.

The protein localises to the cytoplasm. The catalysed reaction is Endonucleolytic cleavage to 5'-phosphomonoester.. Digests double-stranded RNA. Involved in the processing of primary rRNA transcript to yield the immediate precursors to the large and small rRNAs (23S and 16S). Processes some mRNAs, and tRNAs when they are encoded in the rRNA operon. Processes pre-crRNA and tracrRNA of type II CRISPR loci if present in the organism. The protein is Ribonuclease 3 of Corynebacterium diphtheriae (strain ATCC 700971 / NCTC 13129 / Biotype gravis).